A 234-amino-acid chain; its full sequence is Putative gustatory receptor clone PTE38 (234 aa).

Residues 1-11 (MYLFFSNLSFN) traverse the membrane as a helical segment. The Extracellular segment spans residues 12–42 (DICIITTTIPKMLMNVQSHDQSITYLGCLSQ). A disulfide bond links C39 and C121. The chain crosses the membrane as a helical span at residues 43–62 (VYLIVNFGSIESCLLAVMAY). Residues 63-84 (DRYVAICHPLKYTVIMNHYFCV) lie on the Cytoplasmic side of the membrane. A helical transmembrane segment spans residues 85 to 105 (MLLLFACSLALHMCLFHILMV). Over 106-138 (LILTFCTKTEIPHFFCELAHIIKLTCSDNFINY) the chain is Extracellular. Residues 139–160 (LLIYTVSVLFFGVHIVGIILSY) form a helical membrane-spanning segment. The Cytoplasmic segment spans residues 161-182 (IYTVSSVLRMSLLGGMYKAFST). The chain crosses the membrane as a helical span at residues 183-202 (CGSHLSVVSLFYGTGFGVHI). Residues 203–212 (SSPLTDSPRK) lie on the Extracellular side of the membrane. A helical membrane pass occupies residues 213 to 234 (TVVASVMYTVVTQMHGPFIYSL).

It belongs to the G-protein coupled receptor 1 family. As to expression, tongue specific.

It localises to the cell membrane. Possible taste receptor. This chain is Putative gustatory receptor clone PTE38, found in Rattus norvegicus (Rat).